The following is a 234-amino-acid chain: Nuclear transcription factor Y subunit B-6 (234 aa).

Disordered regions lie at residues 1–21 and 35–55; these read MERG…TPSP and MRPP…EECT. The DNA-binding element occupies 63–69; sequence MPIANVI. Positions 90-101 are subunit association domain (SAD); sequence IQECVSEYISFI. The segment at 206 to 234 is disordered; the sequence is NEPNSKMSGSSSGASGARVEVFPTQQHKY. Positions 213-222 are enriched in low complexity; it reads SGSSSGASGA.

It belongs to the NFYB/HAP3 subunit family. In terms of assembly, heterotrimeric transcription factor composed of three components, NF-YA, NF-YB and NF-YC. NF-YB and NF-YC must interact and dimerize for NF-YA association and DNA binding. Interacts with PRN1. Binds directly with DPB3-1. In terms of tissue distribution, expressed in roots, flowers and developing siliques. Present in etiolated seedlings.

Its subcellular location is the nucleus. Functionally, component of the NF-Y/HAP transcription factor complex. The NF-Y complex stimulates the transcription of various genes by recognizing and binding to a CCAAT motif in promoters. Plays a role in the regulation of the embryogenesis. Involved in the abscisic acid (ABA) signaling pathway. The polypeptide is Nuclear transcription factor Y subunit B-6 (Arabidopsis thaliana (Mouse-ear cress)).